Here is a 668-residue protein sequence, read N- to C-terminus: mRNA cap guanine-N(7) methyltransferase (668 aa).

The span at 1 to 19 (MYDPARDSWEERDGDEARS) shows a compositional bias: basic and acidic residues. The interval 1–281 (MYDPARDSWE…RAQVEEAMRA (281 aa)) is disordered. The segment covering 44–65 (GENNNTTDLQQHPDPSSKTTAS) has biased composition (polar residues). The segment covering 73 to 88 (SQPAQPTTQTPPSVST) has biased composition (low complexity). A compositionally biased stretch (polar residues) spans 100-129 (KASNPQSLTSTAQNQLNKSNTTMENTSGSA). Positions 133–142 (PRADPSDKPN) are enriched in basic and acidic residues. Positions 148–157 (ASPTDQNGSQ) are enriched in polar residues. The span at 257-279 (LVDRETLRRRQEERERAQVEEAM) shows a compositional bias: basic and acidic residues. One can recognise an mRNA cap 0 methyltransferase domain in the interval 310 to 668 (SKIKGLRSFN…FYHAFCFYKV (359 aa)). Residue 319–320 (NN) coordinates mRNA. S-adenosyl-L-methionine contacts are provided by residues lysine 323, glycine 366, aspartate 390, aspartate 428, 471–473 (MFT), and tyrosine 476. Residues 524-547 (ARQAQAKKEKSDEAPEDGEVEEDD) are disordered. Residues 537–547 (APEDGEVEEDD) are compositionally biased toward acidic residues.

Belongs to the class I-like SAM-binding methyltransferase superfamily. mRNA cap 0 methyltransferase family.

The protein resides in the nucleus. The catalysed reaction is a 5'-end (5'-triphosphoguanosine)-ribonucleoside in mRNA + S-adenosyl-L-methionine = a 5'-end (N(7)-methyl 5'-triphosphoguanosine)-ribonucleoside in mRNA + S-adenosyl-L-homocysteine. In terms of biological role, responsible for methylating the 5'-cap structure of mRNAs. The protein is mRNA cap guanine-N(7) methyltransferase (abd1) of Aspergillus fumigatus (strain ATCC MYA-4609 / CBS 101355 / FGSC A1100 / Af293) (Neosartorya fumigata).